The primary structure comprises 3020 residues: MASQQDSGFFEISIKYLLKSWSNASPVGNGYIKPPVPPASGTHREKGPPAMLPINVDPDSKPGEYVLKSLFVNFTTQAERKIRIIMAEPLEKPLTKSLQRGEDPQFDQVISSMSSLSEYCLPSILRTLFDWYKRQNGIEDESHEYRPRTSNKSKSDEQQRDYLMERRDLAIDFIFSLVLIEVLKQIPLHPVIDSLIHDIINLAFKHFKYKEGYLGPNTGNMHIVADLYAEVIGVLAQAKFPAVKKKFMAELKELRHKEQSPYVVQSIISLIMGMKFFRIKMYPVEDFEASLQFMQECAHYFLEVKDKDIKHALAGLFVEILVPVAAAVKNEVNVPCLRNFVESLYDTTLELSSRKKHSLALYPLVTCLLCVSQKQLFLNRWHVFLNNCLSNLKNKDPKMARVALESLYRLLWVYMIRIKCESNTATQSRLITITTTLFPKGSRGVVPRDMPLNIFVKIIQFIAQERLDFAMKEIIFDFLCVGKPAKAFSLNPERMNIGLRAFLVIADSLQQKDGEPPMPVTGAVLPSGNTLRVKKTYLSKTLTEEEAKMIGMSLYYSQVRKAVGNILRHLDKEVGRCMMLTNVQMLNKEPEDMITGERKPKIDLFRTCVAAIPRLLPDGMSKLELIDLLARLSIHMDDELRHIAQNSLQGLLVDFSDWREDVLFGFTNFLLREVNDMHHTLLDSSLKLLLQLLTQWKLVIQTQGRAYEQANKIRNSELIPNGSSHRMQSERGPHCSVLHAVEGFALVLLCSFQVATRKLSVLILKEIRALFLALGQPEDDDRPMIDVMDQLSSSILESFIHVAVSDSATLPPTHNVDLQWLVEWNAVLVNSHYDVKSPSHVWIFAQSVKDPWVLCLFSFLRQENLPKHCPTALSYAWPYAFTRLQSVMPLVDPNSPVNAKKTSTASSGDNYVTLWRNYLILCFGVAKPSIMSPGHLRASTPEIMATTPDGTVSYDNKAIGTPSVGVLLKQLVPLMRLESIEITESLVLGFGRTNSLVFRELVEELHPLMKEALERRPENKKRRERRDLLRLQLLRIFELLADAGVISDSTNGALERDTLALGALFLEYVDLTRMLLEAENDKEVEILKDIRAHFSAMVANLIQCVPVHHRRFLFPQQSLRHHLFILFSQWAGPFSIMFTPLDRYSDRNHQITRYQYCALKAMSAVLCCGPVFDNVGLSPDGYLYKWLDNILACQDLRVHQLGCEVVMLLLELNPDQINLFNWAIDRCYTGSYQLASGCFKAIATVCGNRNYPFDIVTLLNLVLFKASDTNREIYEVSMQLMQILEAKLFVHSKKVAEQRPGSILYGTHGPLPPLYSVSLALLSCELARMYPELTLPLFSEVSQRFPTTHPNGRQIMLTYLLPWLHNIELVDSRLLLPGSSPSSPEDEVKDREGEVTASHGLKGNGWGSPEATSLVLNNLMYMTAKYGDEVPGAEMENAWNALANNEKWSNNLRVTLQFLISLCGVSSDTILLPYIKKVATYLCRNNTIQTMEELLFELQQTEPVNPIVQHCDNPPFYRFTASSKASAAASGTTSSSNTVVAGQDSFPDPEESKILKESDDRFSNVIRAHTRLESRYSNSSGGSYDEDKNDPISPYTGWLLSITEAKQPQPLPMPCSGGCWAPLVDYLPETITPRGPLHRCNIAVIFMTEMVVDHSVREDWALHLPLLLHAVFLGLDHYRPEVFEHSKKLLLHLLIALSCNSNFHAIASVLLQTREMGEAKTLTMQPAYQPEYLYTGGFDFLREDQSSPVPDSGLNSSSTSSSISLGGSSGNLPQMTQEVEDVEAATETDEKASKLIEFLTTRAFGPLWCHEDITPKNQNSKSAEQLSNFLRHVVSVFKDSRSGFHLEQHLSEVALQTALASSSRHYAGRSFQIFRALKQPLSAHALSDLLSRLVEVIGEHGDEIQGYVMEALLTLEAAVDNLSDCLKNSDLFTVLSRSSSPDLSSSSKLTASRKSTGQLNVNPGTPGSGGGGGGSGNTTTAERSRHQRSFSVPKKFGVVDRSSDPPRSATLDRIQACTQQGLSSKTRSNSSLKESLTDPSHVSHPTNLLATIFWVTVALMESDFEFEYLMALRLLNRLLAHMPLEKAENREKLEKLQAQLKWADFPGLQQLLLKGFTSLTTTDLTLQLFSLLTSVSKVPMVDSSQAIGFPLNVLCLLPQLIQHFENPNQFCKDIAERIAQVCLEEKNPKLSNLAHVMTLYKTHSYTRDCATWVNVVCRYLHEAYADITLNMVTYLAELLEKGLPSMQQPLLQVIYSLLSYMDLSVVPVKQFNMEVLKTIEKYVQSIHWREALNILKLVVSRSASLVLPSYQHSDLSKIELHRVWTSASKELPGKTLDFHFDISETPIIGRRYDELQNSSGRDGKPRAMAVTRSASSTSSGSNSNVLVPVSWKRPQYSQKRTKEKLVHVLSLCGQEVGLSKNPSVIFSSCGDLDLPEHQTSLVSSEDGPREQENMDDTNSEQQFRVFRDFDFLDVELEDGEGESMDNFNWGVRRRSLDSLDKCDMQILEERQLSRSTPSLNKMSHEDSDESSEEDLTASQILEHSDLIMNLSPSEEANPMELLTSACDSAPADPHSFNTRMANFEASLPDINNLQISEGSKAEAVPEEEDTTVHEDDLSSSINELPAAFECSDSFSLDMTEAEEKGNRGLDQYTLASFGEGDRGVSPPPSPFFSAILAAFQPAACDDAEEAWRSHINQLMCDSDGSCAVYTFHVFSSLFKNIQKRFCFLTCDAASYLGDNLRGIGSKFVSSSQMLTSCSECPTLFVDAETLLSCGLLDKLKFSVLELQEYLDTYNNRKEATLSWLANCKATFAGGSRDGVITCQPGDSEEKQLELCQRLYKLHFQLLLLYQSYCKLIGQVHEVSSVPELLNMSRELSDLKRNLKEATAAIATDPLYIEGAWSEPTFTSTEAAIQSMLECLKNNELGKALRQIKECRSLWPNDIFGSSSDDEVQTLLNIYFRHQTLGQTGTYALVGSNHSLTEICTKLMELNMEIRDMIRRAQNYRVLTAFLPDSSVSGTSL.

Tyr213 bears the Phosphotyrosine mark. 3 disordered regions span residues 1378-1404 (GSSPSSPEDEVKDREGEVTASHGLKGN), 1529-1554 (ASGTTSSSNTVVAGQDSFPDPEESKI), and 1746-1773 (SSPVPDSGLNSSSTSSSISLGGSSGNLP). Residues Ser1382 and Ser1383 each carry the phosphoserine modification. Over residues 1752–1772 (SGLNSSSTSSSISLGGSSGNL) the composition is skewed to low complexity. A phosphoserine mark is found at Ser1936 and Ser1940. The segment covering 1937-1956 (RSSSPDLSSSSKLTASRKST) has biased composition (low complexity). 2 disordered regions span residues 1937–2042 (RSSS…PSHV) and 2355–2384 (LQNSSGRDGKPRAMAVTRSASSTSSGSNSN). Gly residues predominate over residues 1966–1976 (PGSGGGGGGSG). Polar residues predominate over residues 2016 to 2042 (ACTQQGLSSKTRSNSSLKESLTDPSHV). The segment covering 2369–2384 (AVTRSASSTSSGSNSN) has biased composition (low complexity). Ser2427 and Ser2428 each carry phosphoserine. The disordered stretch occupies residues 2439–2458 (TSLVSSEDGPREQENMDDTN). Ser2495 is modified (phosphoserine). Positions 2508–2535 (EERQLSRSTPSLNKMSHEDSDESSEEDL) are disordered. Phosphothreonine; by CDK1 is present on Thr2516. The segment covering 2526–2535 (DSDESSEEDL) has biased composition (acidic residues). Ser2815 carries the phosphoserine modification.

The protein belongs to the furry protein family. When phosphorylated by CDK1, interacts with PLK1; this interaction occurs in mitotic cells, but not in interphase cells, and leads to further FRY phosphorylation by PLK1. In terms of processing, phosphorylated by AURKA, CDK1 and PLK1.

It localises to the cytoplasm. It is found in the cytoskeleton. Its subcellular location is the microtubule organizing center. The protein resides in the centrosome. The protein localises to the spindle pole. In terms of biological role, plays a crucial role in the structural integrity of mitotic centrosomes and in the maintenance of spindle bipolarity by promoting PLK1 activity at the spindle poles in early mitosis. May function as a scaffold promoting the interaction between AURKA and PLK1, thereby enhancing AURKA-mediated PLK1 phosphorylation. The protein is Protein furry homolog (Fry) of Mus musculus (Mouse).